Consider the following 1481-residue polypeptide: Cystic fibrosis transmembrane conductance regulator (1481 aa).

The Cytoplasmic segment spans residues 1–77 (MQRSPLEKAS…KLINALRRCF (77 aa)). The chain crosses the membrane as a helical span at residues 78 to 98 (FWRFMFYGILLYLGEVTKAVQ). The region spanning 81–365 (FMFYGILLYL…WAVQTWYDSL (285 aa)) is the ABC transmembrane type-1 1 domain. Topologically, residues 99 to 122 (PLLLGRIIASYDPDNKEERSIAIY) are extracellular. Residues 123 to 146 (LGIGLCLLFIVRTLLLHPAIFGLH) traverse the membrane as a helical segment. The Cytoplasmic portion of the chain corresponds to 147-195 (HIGMQMRIAMFSLIYKKTLKLSSRVLDKISIGQLVSLLSNNLNKFDEGL). A helical transmembrane segment spans residues 196–216 (ALAHFVWIVPLQVALLMGLIW). Residues 217–222 (ELLQAS) lie on the Extracellular side of the membrane. The chain crosses the membrane as a helical span at residues 223–243 (AFCGLGFLIVLALFQAGLGRM). The Cytoplasmic segment spans residues 244 to 298 (MMKYRDQRAGKINERLVITSEMIENIQSVKAYCWEEAMEKMIENLRQTELKLTRK). Residues 299 to 319 (AAYVRYFNSSAFFFSGFFVVF) form a helical membrane-spanning segment. At 320-339 (LSVLPYALIKGIVLRKIFTT) the chain is on the extracellular side. The helical transmembrane segment at 340 to 358 (ISFCIVLRMAVTRQFPWAV) threads the bilayer. At 359-858 (QTWYDSLGAI…YLRYITVHKS (500 aa)) the chain is on the cytoplasmic side. ATP is bound by residues Trp-401, Ser-434, 458–465 (GSTGAGKT), and Gln-493. Residues 423–646 (NDDDSLFFSN…RPDFSSKLMG (224 aa)) enclose the ABC transporter 1 domain. Cys-524 carries S-palmitoyl cysteine lipidation. 2 positions are modified to phosphoserine: Ser-549 and Ser-660. Positions 654–831 (SAERRNSILT…EEINEEDLKE (178 aa)) are disordered R region. Ser-670 is subject to Phosphoserine; by PKA. The residue at position 686 (Ser-686) is a Phosphoserine. Residue Lys-688 forms a Glycyl lysine isopeptide (Lys-Gly) (interchain with G-Cter in ubiquitin) linkage. Ser-700 and Ser-712 each carry phosphoserine. Position 717 is a phosphothreonine (Thr-717). Ser-737, Ser-753, Ser-768, Ser-790, Ser-795, and Ser-813 each carry phosphoserine. The helical transmembrane segment at 859 to 879 (LIFVLIWCLVIFLAEVAASLV) threads the bilayer. Positions 859–1155 (LIFVLIWCLV…AVNSSIDVDS (297 aa)) constitute an ABC transmembrane type-1 2 domain. The Extracellular portion of the chain corresponds to 880-918 (VLWFLGNTPPQDKGNSTYSRNNSYAVIITRTSSYYVFYI). Residues Asn-894 and Asn-900 are each glycosylated (N-linked (GlcNAc...) asparagine). The discontinuously helical transmembrane segment at 919 to 939 (YVGVADTLLAMGFFRGLPLVH) threads the bilayer. Topologically, residues 940 to 990 (TLITVSKILHHKMLHSVLQAPMSTLNTLKAGGILNRFSKDIAILDDLLPLT) are cytoplasmic. Residues 991–1011 (IFDFIQLLLIVIGAIAVVAVL) traverse the membrane as a helical segment. The Extracellular portion of the chain corresponds to 1012 to 1013 (QP). Residues 1014 to 1034 (YIFVATVPVIVAFIMLRAYFL) form a helical membrane-spanning segment. The Cytoplasmic portion of the chain corresponds to 1035–1095 (QTSQQLKQLE…TANWFLYLST (61 aa)). A helical membrane pass occupies residues 1096-1116 (LRWFQMRIEMIFVIFFIAVTF). The Extracellular portion of the chain corresponds to 1117 to 1130 (ISILTTGEGEGTVG). Residues 1131 to 1151 (IILTLAMNIMSTLQWAVNSSI) form a helical membrane-spanning segment. Residues 1152-1481 (DVDSLMRSVS…TEEEVQDTRL (330 aa)) are Cytoplasmic-facing. The ABC transporter 2 domain occupies 1211-1444 (MTVKDLTAKY…RSLFRQAISP (234 aa)). Residues Tyr-1220 and 1245–1252 (GRTGSGKS) contribute to the ATP site. Residues 1387–1481 (RTLKQAFADC…TEEEVQDTRL (95 aa)) form an interaction with GORASP2 region. Cys-1396 carries S-palmitoyl cysteine lipidation. Phosphoserine occurs at positions 1445 and 1457. Residues 1479-1481 (TRL) carry the PDZ-binding motif.

The protein belongs to the ABC transporter superfamily. ABCC family. CFTR transporter (TC 3.A.1.202) subfamily. As to quaternary structure, monomer; does not require oligomerization for channel activity. May form oligomers in the membrane. Interacts with SLC26A3, SLC26A6 and NHERF1. Interacts with SHANK2. Interacts with MYO6. Interacts (via C-terminus) with GOPC (via PDZ domain); this promotes CFTR internalization and thereby decreases channel activity. Interacts with SLC4A7 through NHERF1. Found in a complex with MYO5B and RAB11A. Interacts with ANO1. Interacts with SLC26A8. Interacts with AHCYL1; the interaction increases CFTR activity. Interacts with CSE1L. The core-glycosylated form interacts with GORASP2 (via PDZ GRASP-type 1 domain) in respone to ER stress. Interacts with MARCHF2; the interaction leads to CFTR ubiqtuitination and degradation. Interacts with ADGRG2. In terms of processing, N-glycosylated. Post-translationally, phosphorylated; cAMP treatment promotes phosphorylation and activates the channel. Dephosphorylation decreases the ATPase activity (in vitro). Phosphorylation at PKA sites activates the channel. Phosphorylation at PKC sites enhances the response to phosphorylation by PKA. Phosphorylated by AMPK; this inhibits channel activity. Ubiquitinated, leading to its degradation in the lysosome. Deubiquitination by USP10 in early endosomes enhances its endocytic recycling to the cell membrane. Ubiquitinated by RNF185 during ER stress. Ubiquitinated by MARCHF2.

The protein resides in the apical cell membrane. It localises to the early endosome membrane. Its subcellular location is the cell membrane. The protein localises to the recycling endosome membrane. It is found in the endoplasmic reticulum membrane. The protein resides in the nucleus. It carries out the reaction ATP + H2O + closed Cl(-) channel = ADP + phosphate + open Cl(-) channel.. It catalyses the reaction chloride(in) = chloride(out). The catalysed reaction is hydrogencarbonate(in) = hydrogencarbonate(out). The enzyme catalyses ATP + H2O = ADP + phosphate + H(+). Functionally, epithelial ion channel that plays an important role in the regulation of epithelial ion and water transport and fluid homeostasis. Mediates the transport of chloride ions across the cell membrane. Possesses an intrinsic ATPase activity and utilizes ATP to gate its channel; the passive flow of anions through the channel is gated by cycles of ATP binding and hydrolysis by the ATP-binding domains. The ion channel is also permeable to HCO(3)(-); selectivity depends on the extracellular chloride concentration. Exerts its function also by modulating the activity of other ion channels and transporters. Contributes to the regulation of the pH and the ion content of the epithelial fluid layer. Modulates the activity of the epithelial sodium channel (ENaC) complex, in part by regulating the cell surface expression of the ENaC complex. May regulate bicarbonate secretion and salvage in epithelial cells by regulating the transporter SLC4A7. Can inhibit the chloride channel activity of ANO1. Plays a role in the chloride and bicarbonate homeostasis during sperm epididymal maturation and capacitation. The chain is Cystic fibrosis transmembrane conductance regulator from Macaca fascicularis (Crab-eating macaque).